Here is a 452-residue protein sequence, read N- to C-terminus: Elongation factor Tu, mitochondrial (452 aa).

A mitochondrion-targeting transit peptide spans Met1–Leu43. The tr-type G domain maps to Lys55–Thr251. A G1 region spans residues Gly64–Thr71. Asp67, Gly69, Lys70, Thr71, and Thr72 together coordinate GTP. Thr71 contributes to the Mg(2+) binding site. Position 79 is an N6-acetyllysine (Lys79). Lys88 carries the post-translational modification N6-acetyllysine; alternate. Lys88 carries the post-translational modification N6-succinyllysine; alternate. Residues Gly105–Asn109 form a G2 region. The G3 stretch occupies residues Asp126 to Gly129. The GTP site is built by Asn181, Asp184, Ser219, Ala220, and Leu221. Residues Asn181 to Asp184 form a G4 region. The segment at Ser219–Leu221 is G5. Lys234 bears the N6-succinyllysine mark. At Lys256 the chain carries N6-acetyllysine. Thr278 is modified (phosphothreonine). At Lys286 the chain carries N6-succinyllysine. Residue Ser312 is modified to Phosphoserine. 2 positions are modified to N6-acetyllysine: Lys361 and Lys418.

This sequence belongs to the TRAFAC class translation factor GTPase superfamily. Classic translation factor GTPase family. EF-Tu/EF-1A subfamily. In terms of assembly, interacts with NLRX1. Interacts with ATG16L1.

The protein resides in the mitochondrion. It carries out the reaction GTP + H2O = GDP + phosphate + H(+). In terms of biological role, GTP hydrolase that promotes the GTP-dependent binding of aminoacyl-tRNA to the A-site of ribosomes during protein biosynthesis. Also plays a role in the regulation of autophagy and innate immunity. Recruits ATG5-ATG12 and NLRX1 at mitochondria and serves as a checkpoint of the RIGI-MAVS pathway. In turn, inhibits RLR-mediated type I interferon while promoting autophagy. This is Elongation factor Tu, mitochondrial (TUFM) from Bos taurus (Bovine).